The following is a 299-amino-acid chain: ATP phosphoribosyltransferase (299 aa).

The protein belongs to the ATP phosphoribosyltransferase family. Long subfamily. Equilibrium between an active dimeric form, an inactive hexameric form and higher aggregates. Interconversion between the various forms is largely reversible and is influenced by the natural substrates and inhibitors of the enzyme. It depends on Mg(2+) as a cofactor.

Its subcellular location is the cytoplasm. The catalysed reaction is 1-(5-phospho-beta-D-ribosyl)-ATP + diphosphate = 5-phospho-alpha-D-ribose 1-diphosphate + ATP. The protein operates within amino-acid biosynthesis; L-histidine biosynthesis; L-histidine from 5-phospho-alpha-D-ribose 1-diphosphate: step 1/9. Its activity is regulated as follows. Feedback inhibited by histidine. In terms of biological role, catalyzes the condensation of ATP and 5-phosphoribose 1-diphosphate to form N'-(5'-phosphoribosyl)-ATP (PR-ATP). Has a crucial role in the pathway because the rate of histidine biosynthesis seems to be controlled primarily by regulation of HisG enzymatic activity. The chain is ATP phosphoribosyltransferase from Salmonella choleraesuis (strain SC-B67).